Consider the following 201-residue polypeptide: Methylated-DNA--protein-cysteine methyltransferase (201 aa).

The DNA site is built by Y131, G132, and R146. C163 acts as the Nucleophile; methyl group acceptor in catalysis.

It belongs to the MGMT family.

Its subcellular location is the nucleus. It carries out the reaction a 6-O-methyl-2'-deoxyguanosine in DNA + L-cysteinyl-[protein] = S-methyl-L-cysteinyl-[protein] + a 2'-deoxyguanosine in DNA. The catalysed reaction is a 4-O-methyl-thymidine in DNA + L-cysteinyl-[protein] = a thymidine in DNA + S-methyl-L-cysteinyl-[protein]. In terms of biological role, involved in the cellular defense against the biological effects of O6-methylguanine (O6-MeG) and O4-methylthymine (O4-MeT) in DNA. Repairs the methylated nucleobase in DNA by stoichiometrically transferring the methyl group to a cysteine residue in the enzyme. This is a suicide reaction: the enzyme is irreversibly inactivated. The chain is Methylated-DNA--protein-cysteine methyltransferase (MGT1) from Lodderomyces elongisporus (strain ATCC 11503 / CBS 2605 / JCM 1781 / NBRC 1676 / NRRL YB-4239) (Yeast).